We begin with the raw amino-acid sequence, 1042 residues long: Diacylglycerol lipase-alpha (1042 aa).

Residues 1–22 are Cytoplasmic-facing; sequence MPGIVVFRRRWSVGSDDLVLPA. The helical transmembrane segment at 23-43 threads the bilayer; that stretch reads IFLFLLHTTWFVILSVVLFGL. Topologically, residues 44 to 60 are extracellular; sequence VYNPHEACSLNLVDHGR. A helical transmembrane segment spans residues 61-81; it reads GYLGILLSCMIAEMAIIWLSM. At 82–101 the chain is on the cytoplasmic side; the sequence is RGGILYTEPRDSMQYVLYVR. A helical transmembrane segment spans residues 102–122; it reads LAILVIEFIYAIVGIVWLTQY. Residues 123 to 136 are Extracellular-facing; that stretch reads YTSCNDLTAKNVTL. Asparagine 133 carries an N-linked (GlcNAc...) asparagine glycan. The helical transmembrane segment at 137–157 threads the bilayer; sequence GMVVCNWVVILSVCITVLCVF. Residues 158–1042 lie on the Cytoplasmic side of the membrane; it reads DPTGRTFVKL…KQDELVISAR (885 aa). Catalysis depends on charge relay system residues serine 472 and aspartate 524. Serine 727, serine 729, serine 732, serine 743, serine 782, serine 784, serine 806, serine 808, serine 833, serine 847, and serine 952 each carry phosphoserine. Residues 846-903 form a disordered region; sequence LSKHSQDTQPLEAALGSGGVTPERPPSAAANDEEEEVGGGGGGPASRGELALHNGRLG. Positions 1014-1042 are disordered; it reads LAADKIRTSTPTGHGASPAKQDELVISAR. Threonine 1023 is modified (phosphothreonine).

This sequence belongs to the AB hydrolase superfamily. Lipase family. In terms of assembly, interacts (via C-terminal) with CAMK2A; leading to the phosphorylation and inhibition of DAGLA enzymatic activity. Interacts (via PPXXF motif) with HOMER1 and HOMER2; this interaction is required for DAGLA membrane localization. The cofactor is Ca(2+). Phosphorylated at Ser-782 and Ser-808 by CAMK2A; phosphorylation by CAMK2A inhibits diacylglycerol lipase activity. Highly expressed in brain and pancreas.

The protein resides in the cell membrane. It localises to the postsynaptic density membrane. The protein localises to the early endosome membrane. Its subcellular location is the cell projection. It is found in the dendritic spine membrane. The catalysed reaction is a 1,2-diacyl-sn-glycerol + H2O = a 2-acylglycerol + a fatty acid + H(+). It carries out the reaction 1-octadecanoyl-2-(5Z,8Z,11Z,14Z-eicosatetraenoyl)-sn-glycerol + H2O = 2-(5Z,8Z,11Z,14Z-eicosatetraenoyl)-glycerol + octadecanoate + H(+). It catalyses the reaction 1,2-di-(9Z-octadecenoyl)-sn-glycerol + H2O = 2-(9Z-octadecenoyl)-glycerol + (9Z)-octadecenoate + H(+). The enzyme catalyses 1-(9Z-octadecenoyl)-2-(5Z,8Z,11Z,14Z-eicosatetraenoyl)-sn-glycerol + H2O = 2-(5Z,8Z,11Z,14Z-eicosatetraenoyl)-glycerol + (9Z)-octadecenoate + H(+). The catalysed reaction is 1-(9Z-octadecenoyl)-2-octadecanoyl-sn-glycerol + H2O = 2-octadecanoylglycerol + (9Z)-octadecenoate + H(+). It carries out the reaction 1-(9Z-octadecenoyl)-2-(9Z,12Z-octadecadienoyl)-sn-glycerol + H2O = 2-(9Z,12Z-octadecadienoyl)-glycerol + (9Z)-octadecenoate + H(+). It catalyses the reaction 1-(9Z-octadecenoyl)-2-O-(5Z,8Z,11Z,14Z-eicosatetraenyl)-sn-glycerol + H2O = 2-O-(5Z,8Z,11Z,14Z)-eicosatetraenylglycerol + (9Z)-octadecenoate + H(+). With respect to regulation, inhibited by 1,2,3-triazole urea covalent inhibitors KT172, DH376 and DO34. Inhibited by p-hydroxy-mercuri-benzoate and HgCl(2), but not to PMSF. Also inhibited by RHC80267. Diacylglycerol lipase activity is inhibited by the phosphorylation of Ser-782 and Ser-808 by CAMK2A. Serine hydrolase that hydrolyzes arachidonic acid-esterified diacylglycerols (DAGs) to produce the principal endocannabinoid, 2-arachidonoylglycerol (2-AG). Preferentially hydrolyzes sn-1 fatty acids from diacylglycerols (DAG) that contain arachidonic acid (AA) esterified at the sn-2 position to biosynthesize 2-AG. Has negligible activity against other lipids including monoacylglycerols and phospholipids. Plays a key role in regulating 2-AG signaling in the central nervous system (CNS). Regulates 2-AG involved in retrograde suppression at central synapses. Supports axonal growth during development and adult neurogenesis. Plays a role for eCB signaling in the physiological regulation of anxiety and depressive behaviors. Also regulates neuroinflammatory responses in the brain, in particular, LPS-induced microglial activation. This chain is Diacylglycerol lipase-alpha (DAGLA), found in Homo sapiens (Human).